The primary structure comprises 133 residues: Fluoride-specific ion channel FluC 3 (133 aa).

3 consecutive transmembrane segments (helical) span residues 7–27, 37–57, and 60–80; these read ILVLVGGFIGGVMRFFLSGYV, WGTFVVNVSGAFVIGTAAGLG, and LGAIFSTTIFHEFIMVGLLGG. Gly-79 and Thr-82 together coordinate Na(+). The chain crosses the membrane as a helical span at residues 107–127; it reads IVASALLCVLAVAAGYGGIMW.

The protein belongs to the fluoride channel Fluc/FEX (TC 1.A.43) family.

The protein localises to the cell inner membrane. The enzyme catalyses fluoride(in) = fluoride(out). With respect to regulation, na(+) is not transported, but it plays an essential structural role and its presence is essential for fluoride channel function. In terms of biological role, fluoride-specific ion channel. Important for reducing fluoride concentration in the cell, thus reducing its toxicity. In Brucella suis biovar 1 (strain 1330), this protein is Fluoride-specific ion channel FluC 3.